The following is a 395-amino-acid chain: Calcium sensing receptor, chloroplastic (395 aa).

Over residues 1–12 the composition is skewed to low complexity; that stretch reads MAPVPVSVSATL. Positions 1-27 are disordered; sequence MAPVPVSVSATLAPPPAAPPKTTSRSW. A chloroplast-targeting transit peptide spans 1–39; sequence MAPVPVSVSATLAPPPAAPPKTTSRSWERRAPADAAFAA. The Lumenal, thylakoid segment spans residues 40 to 182; that stretch reads ASSVAGSAAL…TITSLGPEDY (143 aa). The helical transmembrane segment at 183-203 threads the bilayer; sequence VVAAGXAFLAYLLVPPVWSLV. The Stromal portion of the chain corresponds to 204–395; the sequence is SSSLRGYKGD…TRKLLPGGVD (192 aa). Residues 224-345 enclose the Rhodanese domain; the sequence is TTQGYVLIDV…WAQSRLGTDS (122 aa). The residue at position 377 (T377) is a Phosphothreonine.

Post-translationally, phosphorylated in both bundle sheath and mesophyll cells, under both low and high light regimes (70 vs 900 umol photons/m-2/s).

Its subcellular location is the plastid. The protein localises to the chloroplast thylakoid membrane. In terms of biological role, modulates cytoplasmic Ca(2+) concentration and is crucial for proper stomatal regulation in response to elevated levels of external Ca(2+). May function by regulating concentrations of inositol 1,4,5-trisphosphate (IP3), which in turn triggers release of Ca(2+) from internal stores. May play a role in de-etiolation. The protein is Calcium sensing receptor, chloroplastic of Zea mays (Maize).